Consider the following 376-residue polypeptide: Putative glutamate--cysteine ligase 2-1 (376 aa).

The protein belongs to the glutamate--cysteine ligase type 2 family. YbdK subfamily.

It carries out the reaction L-cysteine + L-glutamate + ATP = gamma-L-glutamyl-L-cysteine + ADP + phosphate + H(+). ATP-dependent carboxylate-amine ligase which exhibits weak glutamate--cysteine ligase activity. In Mycolicibacterium smegmatis (strain ATCC 700084 / mc(2)155) (Mycobacterium smegmatis), this protein is Putative glutamate--cysteine ligase 2-1.